Consider the following 193-residue polypeptide: Bcl-2-binding component 3 (193 aa).

Disordered stretches follow at residues 1-32 (MARA…RLMP) and 71-131 (ALGG…VEEE). Position 10 is a phosphoserine (Ser-10). The BH3 signature appears at 137 to 151 (IGAQLRRMADDLNAQ).

Belongs to the Bcl-2 family. In terms of assembly, interacts with MCL1 and BCL2A1. Interacts (via BH3 domain) with BCL2 and BCL2L1/BCL-XL. Interacts (via BH3 domain) with NOL3/ARC (via CARD domain); this interaction prevents BBC3 association with BCL2 and results in CASP8 activation.

Its subcellular location is the mitochondrion. Its function is as follows. Essential mediator of p53/TP53-dependent and p53/TP53-independent apoptosis. Promotes partial unfolding of BCL2L1 and dissociation of BCL2L1 from p53/TP53, releasing the bound p53/TP53 to induce apoptosis. Regulates ER stress-induced neuronal apoptosis. This is Bcl-2-binding component 3 (Bbc3) from Rattus norvegicus (Rat).